Consider the following 350-residue polypeptide: D-alanine--D-alanine ligase (350 aa).

The ATP-grasp domain occupies 143–344 (KRILSTFGIS…FKSLINKLIL (202 aa)). 172–227 (INNIKFPCCIKPSNQGSSFGVNVANDFISLKESIDVAFLYSKKILIEPFIQGREIE) provides a ligand contact to ATP. Residues D298, E311, and N313 each contribute to the Mg(2+) site.

The protein belongs to the D-alanine--D-alanine ligase family. It depends on Mg(2+) as a cofactor. Mn(2+) serves as cofactor.

It is found in the cytoplasm. The catalysed reaction is 2 D-alanine + ATP = D-alanyl-D-alanine + ADP + phosphate + H(+). The protein operates within cell wall biogenesis; peptidoglycan biosynthesis. Cell wall formation. This chain is D-alanine--D-alanine ligase, found in Wigglesworthia glossinidia brevipalpis.